The sequence spans 551 residues: Arginine--tRNA ligase (551 aa).

The short motif at 125–135 is the 'HIGH' region element; that stretch reads ANPTGPLHIGH.

Belongs to the class-I aminoacyl-tRNA synthetase family. As to quaternary structure, monomer.

It localises to the cytoplasm. The catalysed reaction is tRNA(Arg) + L-arginine + ATP = L-arginyl-tRNA(Arg) + AMP + diphosphate. This Nitratidesulfovibrio vulgaris (strain ATCC 29579 / DSM 644 / CCUG 34227 / NCIMB 8303 / VKM B-1760 / Hildenborough) (Desulfovibrio vulgaris) protein is Arginine--tRNA ligase.